A 163-amino-acid chain; its full sequence is Putative MucR family transcriptional regulatory protein RA0938 (163 aa).

It belongs to the ros/MucR family.

This chain is Putative MucR family transcriptional regulatory protein RA0938, found in Rhizobium meliloti (strain 1021) (Ensifer meliloti).